The sequence spans 648 residues: Replication restart protein PriA (648 aa).

The Helicase ATP-binding domain maps to 131 to 297 (TIFNESNKPT…KTHKYQLVTL (167 aa)). ATP is bound at residue 144–151 (GVTGSGKT). The DEAH box motif lies at 240–243 (DEEH). Residues C358, C361, C367, C370, C385, C388, C398, and C401 each coordinate Zn(2+). Residues 393–548 (KIFSSCPECL…SFFTNELEIR (156 aa)) form the Helicase C-terminal domain.

It belongs to the helicase family. PriA subfamily. As to quaternary structure, component of the replication restart primosome. The cofactor is Zn(2+).

The catalysed reaction is Couples ATP hydrolysis with the unwinding of duplex DNA by translocating in the 3'-5' direction.. It carries out the reaction ATP + H2O = ADP + phosphate + H(+). Its function is as follows. Initiates the restart of stalled replication forks, which reloads the replicative helicase on sites other than the origin of replication. Recognizes and binds to abandoned replication forks and remodels them to uncover a helicase loading site. Promotes assembly of the primosome at these replication forks. In Rickettsia typhi (strain ATCC VR-144 / Wilmington), this protein is Replication restart protein PriA.